The sequence spans 485 residues: Dipeptide and tripeptide permease C (485 aa).

Residues Met-1 to Tyr-12 are Cytoplasmic-facing. The helical transmembrane segment at Ile-13 to Leu-33 threads the bilayer. Residues Tyr-34 to Ala-46 lie on the Periplasmic side of the membrane. Residues Ile-47–Leu-67 traverse the membrane as a helical segment. At Ala-68 to Arg-70 the chain is on the cytoplasmic side. A helical membrane pass occupies residues Leu-71 to Gly-93. At Ile-94–Leu-102 the chain is on the periplasmic side. Residues Tyr-103–Gly-125 form a helical membrane-spanning segment. Topologically, residues Glu-126–Ser-140 are cytoplasmic. Residues Leu-141–Ala-161 form a helical membrane-spanning segment. Topologically, residues Gln-162–Tyr-164 are periplasmic. Residues Gly-165–Leu-185 form a helical membrane-spanning segment. Residues Ser-186–Ala-208 lie on the Cytoplasmic side of the membrane. The chain crosses the membrane as a helical span at residues Leu-209–Leu-229. Residues Leu-230–Trp-234 are Periplasmic-facing. A helical transmembrane segment spans residues Ser-235 to Ile-255. The Cytoplasmic segment spans residues Lys-256–Arg-262. Residues Ala-263–Gln-283 traverse the membrane as a helical segment. Over Gly-284–Thr-307 the chain is Periplasmic. A helical membrane pass occupies residues Ala-308–Leu-328. Topologically, residues Ala-329 to Arg-340 are cytoplasmic. The helical transmembrane segment at Val-341–Phe-361 threads the bilayer. Residues Asp-362–Gly-375 are Periplasmic-facing. The chain crosses the membrane as a helical span at residues Val-376–Ile-396. Residues Ala-397 to Gly-406 lie on the Cytoplasmic side of the membrane. A helical transmembrane segment spans residues Val-407–Val-427. Topologically, residues Ala-428–Arg-446 are periplasmic. The chain crosses the membrane as a helical span at residues Phe-447–Phe-467. Topologically, residues Ala-468 to Asp-485 are cytoplasmic.

Belongs to the major facilitator superfamily. Proton-dependent oligopeptide transporter (POT/PTR) (TC 2.A.17) family. Monomer.

Its subcellular location is the cell inner membrane. Its function is as follows. Proton-dependent permease that transports di- and tripeptides. Shows significantly higher specificity towards dipeptides than tripeptides. Has a preference for dipeptides with a C-terminal Lys residue. Can bind Ala-Lys, Lys-Ala, Ala-Ala. Can also transport alanine and trialanine. This Escherichia coli (strain K12) protein is Dipeptide and tripeptide permease C.